The following is a 272-amino-acid chain: Putative hydro-lyase BRADO2538 (272 aa).

This sequence belongs to the D-glutamate cyclase family.

This Bradyrhizobium sp. (strain ORS 278) protein is Putative hydro-lyase BRADO2538.